We begin with the raw amino-acid sequence, 592 residues long: Insulin-like growth factor 2 mRNA-binding protein 2 (592 aa).

RRM domains lie at 3–76 (NKLY…YSVS) and 82–157 (RRIQ…YIPD). The residue at position 11 (Ser-11) is a Phosphoserine. The interval 157-182 (DEEVSSPSPPHRAREQGHGPGSSSQA) is disordered. Phosphoserine is present on residues Ser-162 and Ser-164. KH domains are found at residues 186–251 (DFPL…CRMI), 267–334 (EVPL…EIEI), 420–485 (QETV…QGRI), and 502–568 (KLEA…QRKI). A Phosphothreonine modification is found at Thr-543.

The protein belongs to the RRM IMP/VICKZ family. Can form homooligomers and heterooligomers with IGF2BP1 and IGF2BP3 in an RNA-dependent manner. Interacts with HNRPD. Interacts with IGF2BP1. Interacts with ELAVL1, DHX9, HNRNPU, MATR3 and PABPC1. As to expression, expressed in oocytes, granulosa cells of small and growing follicles and Leydig cells of the testis (at protein level). Expressed in testis and ovary.

Its subcellular location is the nucleus. It localises to the cytoplasm. It is found in the P-body. The protein resides in the stress granule. In terms of biological role, RNA-binding factor that recruits target transcripts to cytoplasmic protein-RNA complexes (mRNPs). This transcript 'caging' into mRNPs allows mRNA transport and transient storage. It also modulates the rate and location at which target transcripts encounter the translational apparatus and shields them from endonuclease attacks or microRNA-mediated degradation. Preferentially binds to N6-methyladenosine (m6A)-containing mRNAs and increases their stability. Binds to the 5'-UTR of the insulin-like growth factor 2 (IGF2) mRNAs. Binding is isoform-specific. Binds to beta-actin/ACTB and MYC transcripts. Increases MYC mRNA stability by binding to the coding region instability determinant (CRD) and binding is enhanced by m6A-modification of the CRD. This is Insulin-like growth factor 2 mRNA-binding protein 2 (Igf2bp2) from Mus musculus (Mouse).